Reading from the N-terminus, the 472-residue chain is Trigger factor (472 aa).

Residues 174–261 (GDIALVSFKG…LEDLKIKELP (88 aa)) form the PPIase FKBP-type domain. Positions 433–472 (NNTVVEKPPEKARDQIKEKSSKKKTTKTNKEKKSSKTPKS) are disordered. The segment covering 439-451 (KPPEKARDQIKEK) has biased composition (basic and acidic residues).

This sequence belongs to the FKBP-type PPIase family. Tig subfamily.

Its subcellular location is the cytoplasm. It carries out the reaction [protein]-peptidylproline (omega=180) = [protein]-peptidylproline (omega=0). Functionally, involved in protein export. Acts as a chaperone by maintaining the newly synthesized protein in an open conformation. Functions as a peptidyl-prolyl cis-trans isomerase. The polypeptide is Trigger factor (Prochlorococcus marinus (strain NATL1A)).